The following is a 159-amino-acid chain: Small ribosomal subunit protein uS13 (159 aa).

The disordered stretch occupies residues Gln136–Lys159. Low complexity predominate over residues Thr138–Gly149.

This sequence belongs to the universal ribosomal protein uS13 family. As to quaternary structure, part of the 30S ribosomal subunit. Forms a loose heterodimer with protein S19. Forms two bridges to the 50S subunit in the 70S ribosome.

Its function is as follows. Located at the top of the head of the 30S subunit, it contacts several helices of the 16S rRNA. In the 70S ribosome it contacts the 23S rRNA (bridge B1a) and protein L5 of the 50S subunit (bridge B1b), connecting the 2 subunits; these bridges are implicated in subunit movement. The protein is Small ribosomal subunit protein uS13 of Methanothrix thermoacetophila (strain DSM 6194 / JCM 14653 / NBRC 101360 / PT) (Methanosaeta thermophila).